A 214-amino-acid chain; its full sequence is Ribonuclease HII (214 aa).

The RNase H type-2 domain maps to 26–214 (EIVCGVDEAG…PVREAFDLIR (189 aa)). A divalent metal cation is bound by residues aspartate 32, glutamate 33, and aspartate 124.

Belongs to the RNase HII family. It depends on Mn(2+) as a cofactor. Mg(2+) is required as a cofactor.

It localises to the cytoplasm. The catalysed reaction is Endonucleolytic cleavage to 5'-phosphomonoester.. In terms of biological role, endonuclease that specifically degrades the RNA of RNA-DNA hybrids. The polypeptide is Ribonuclease HII (Burkholderia mallei (strain NCTC 10247)).